The sequence spans 332 residues: MLALGKLLDLTLAGREPTEKIQLTADGTRLHWLAEGALEVTPIGARDNGVDLLLSAGIHGNETAPIELLERLIRKVAAGTLKPAARVLFLFGNPEAIRRGERYVEQDMNRLFNGRHEEGSGNEAFRAAELERLAQVFFSKTERVHLHYDLHTAIRGSKIEQFALYPWAEGRQHSRSELARLRDAGIEAVLLQNKPGITFSAYTYGQLGAEAFTLELGKARPFGENQEVNLERLERSLELLIDGSEEQPDGSRLDGLKLFSVSREVIKHSDHFRLHLDDDVANFTELSPGYLLAEDIGGTRWVVDEVGARIIFPNPRVKNGLRAGILVVPAKL.

Zn(2+)-binding residues include histidine 59, glutamate 62, and histidine 151. Glutamate 215 is an active-site residue.

This sequence belongs to the AspA/AstE family. Succinylglutamate desuccinylase subfamily. Requires Zn(2+) as cofactor.

The enzyme catalyses N-succinyl-L-glutamate + H2O = L-glutamate + succinate. Its pathway is amino-acid degradation; L-arginine degradation via AST pathway; L-glutamate and succinate from L-arginine: step 5/5. Transforms N(2)-succinylglutamate into succinate and glutamate. In Pseudomonas aeruginosa (strain LESB58), this protein is Succinylglutamate desuccinylase.